The following is a 101-amino-acid chain: Integration host factor subunit alpha (101 aa).

It belongs to the bacterial histone-like protein family. As to quaternary structure, heterodimer of an alpha and a beta chain.

In terms of biological role, this protein is one of the two subunits of integration host factor, a specific DNA-binding protein that functions in genetic recombination as well as in transcriptional and translational control. The polypeptide is Integration host factor subunit alpha (Maricaulis maris (strain MCS10) (Caulobacter maris)).